A 142-amino-acid polypeptide reads, in one-letter code: Myosin-2 essential light chain (142 aa).

EF-hand domains follow at residues 2 to 37 (DDLADCREVFAYFDSKGDERISVQQVGDVLRALGQN) and 75 to 110 (HTVEEFVEGLSHFDKEGNGMINVAELRHLLTTLGER).

As to quaternary structure, myosin is a hexamer of 2 heavy chains and 4 light chains (two regulatory light chains and two essential light chains).

Its subcellular location is the cytoplasm. The protein localises to the cytoskeleton. In terms of biological role, required for cytokinesis and embryo elongation. May regulate myosin II complex formation and/or the association of myosin with actin. May be involved in the organization of mlc-4 and nmy-2 into bundles. The protein is Myosin-2 essential light chain of Caenorhabditis elegans.